A 205-amino-acid chain; its full sequence is MTTQYGFFIDSSRCTGCKTCELACKDYKDLTPEVSFRRIYEYAGGDWQEDNGVWHQNVFAYYLSISCNHCEDPACTKVCPSGAMHKREDGFVVVDEDVCIGCRYCHMACPYGAPQYNETKGHMTKCDGCYDRVAEGKKPICVESCPLRALDFGPIDELRKKHGDLAAVAPLPRAHFTKPNIVIKPNANSRPTGDTTGYLANPKEV.

4Fe-4S ferredoxin-type domains lie at 5-33 (YGFF…LTPE), 59-89 (FAYY…KRED), and 90-119 (GFVV…YNET). [4Fe-4S] cluster is bound by residues Cys-14, Cys-17, Cys-20, Cys-24, Cys-67, Cys-70, Cys-75, Cys-79, Cys-99, Cys-102, Cys-105, Cys-109, Cys-126, Cys-129, Cys-141, and Cys-145. Residues 184–205 (KPNANSRPTGDTTGYLANPKEV) form a disordered region. The span at 186-195 (NANSRPTGDT) shows a compositional bias: polar residues.

Heterotrimeric enzyme composed of a catalytic heterodimer (DmsAB) and a membrane anchor protein (DmsC). Requires [4Fe-4S] cluster as cofactor.

In terms of biological role, electron transfer subunit of the terminal reductase during anaerobic growth on various sulfoxide and N-oxide compounds. The polypeptide is Anaerobic dimethyl sulfoxide reductase chain B (dmsB) (Escherichia coli (strain K12)).